The chain runs to 187 residues: Putative manganese efflux pump MntP (187 aa).

Helical transmembrane passes span 3 to 23 (MSAT…ASIG), 41 to 61 (LIFG…GFFA), 62 to 82 (SQYI…ILGG), 107 to 129 (LLVC…LAFL), 143 to 163 (ATMI…PILG), and 166 to 186 (AEII…YEHL).

The protein belongs to the MntP (TC 9.B.29) family.

The protein localises to the cell inner membrane. Probably functions as a manganese efflux pump. The protein is Putative manganese efflux pump MntP of Pectobacterium atrosepticum (strain SCRI 1043 / ATCC BAA-672) (Erwinia carotovora subsp. atroseptica).